The primary structure comprises 298 residues: UDP-N-acetylenolpyruvoylglucosamine reductase (298 aa).

An FAD-binding PCMH-type domain is found at 26-190 (RAGGPAERLY…VAAVLDLEPG (165 aa)). R170 is a catalytic residue. The active-site Proton donor is S219. Residue E289 is part of the active site.

The protein belongs to the MurB family. It depends on FAD as a cofactor.

It localises to the cytoplasm. The catalysed reaction is UDP-N-acetyl-alpha-D-muramate + NADP(+) = UDP-N-acetyl-3-O-(1-carboxyvinyl)-alpha-D-glucosamine + NADPH + H(+). It functions in the pathway cell wall biogenesis; peptidoglycan biosynthesis. Its function is as follows. Cell wall formation. The polypeptide is UDP-N-acetylenolpyruvoylglucosamine reductase (Alkalilimnicola ehrlichii (strain ATCC BAA-1101 / DSM 17681 / MLHE-1)).